We begin with the raw amino-acid sequence, 256 residues long: Cysteine-rich repeat secretory protein 42 (256 aa).

The N-terminal stretch at 1 to 26 (MSSVFGSVHILAMIAIQLLLTHSVSS) is a signal peptide. 2 Gnk2-homologous domains span residues 33-136 (YLHH…SVAS) and 142-253 (YEND…LYPF).

This sequence belongs to the cysteine-rich repeat secretory protein family.

It localises to the secreted. This is Cysteine-rich repeat secretory protein 42 (CRRSP42) from Arabidopsis thaliana (Mouse-ear cress).